The primary structure comprises 445 residues: Argininosuccinate synthase (445 aa).

ATP is bound by residues 17 to 25 and A43; that span reads AFSGGLDTS. Y99 lines the L-citrulline pocket. G129 and T131 together coordinate ATP. 3 residues coordinate L-aspartate: T131, N135, and D136. N135 lines the L-citrulline pocket. ATP is bound at residue D136. 2 residues coordinate L-citrulline: R139 and S192. D194 contributes to the ATP binding site. L-citrulline-binding residues include T201, E203, and E280.

The protein belongs to the argininosuccinate synthase family. Type 2 subfamily. In terms of assembly, homotetramer.

The protein localises to the cytoplasm. It catalyses the reaction L-citrulline + L-aspartate + ATP = 2-(N(omega)-L-arginino)succinate + AMP + diphosphate + H(+). It participates in amino-acid biosynthesis; L-arginine biosynthesis; L-arginine from L-ornithine and carbamoyl phosphate: step 2/3. The protein is Argininosuccinate synthase of Rhodopseudomonas palustris (strain BisB18).